A 109-amino-acid chain; its full sequence is Elongation factor G, chloroplastic (109 aa).

Belongs to the GTP-binding elongation factor family. EF-G/EF-2 subfamily.

The protein localises to the plastid. It is found in the chloroplast. Its pathway is protein biosynthesis; polypeptide chain elongation. In terms of biological role, chloroplast-localized elongation factor EF-G involved in protein synthesis in plastids. Catalyzes the GTP-dependent ribosomal translocation step during translation elongation. During this step, the ribosome changes from the pre-translocational (PRE) to the post-translocational (POST) state as the newly formed A-site-bound peptidyl-tRNA and P-site-bound deacylated tRNA move to the P and E sites, respectively. Catalyzes the coordinated movement of the two tRNA molecules, the mRNA and conformational changes in the ribosome. This Arachis hypogaea (Peanut) protein is Elongation factor G, chloroplastic.